A 389-amino-acid chain; its full sequence is MDLYEYQARDLFEAHGVPVLAGIVAQTPDEAKAAAEKIGGVTVVKAQVKVGGRGKAGGVKVAKTADEAYEHAKAILGMDIKGHTVHQVMIAQGADIAEEYYFSVLLDRANRTYLAMCSVEGGMEIEQLAEERPEALAKVPVSALTGIDAETAQKIVAEAGFPEELRADVAEVIQKLWEVFEKEDATLVEVNPLVKTGDGKILALDGKVSLDDNAEFRQEGHAALVDERTEDPLEAKAKANDLNYVKLDGQVGVIGNGAGLVMSTLDVVAYAGEKHGGVKPANFLDIGGGANAEVMANGLDVILGDEQVKSVFVNVFGGITACDAVANGIVKALEILGDAATKPLVVRLDGNAVEEGRRILQEANHPLVTLAATMDEGADKAAELAHTAN.

The 228-residue stretch at 9–236 (RDLFEAHGVP…ERTEDPLEAK (228 aa)) folds into the ATP-grasp domain. ATP-binding positions include lysine 45, 52–54 (GRG), alanine 94, and glutamate 99. Mg(2+) contacts are provided by asparagine 191 and aspartate 205. Substrate-binding positions include asparagine 256 and 318-320 (GIT).

This sequence belongs to the succinate/malate CoA ligase beta subunit family. Heterotetramer of two alpha and two beta subunits. The cofactor is Mg(2+).

It catalyses the reaction succinate + ATP + CoA = succinyl-CoA + ADP + phosphate. The enzyme catalyses GTP + succinate + CoA = succinyl-CoA + GDP + phosphate. It functions in the pathway carbohydrate metabolism; tricarboxylic acid cycle; succinate from succinyl-CoA (ligase route): step 1/1. Functionally, succinyl-CoA synthetase functions in the citric acid cycle (TCA), coupling the hydrolysis of succinyl-CoA to the synthesis of either ATP or GTP and thus represents the only step of substrate-level phosphorylation in the TCA. The beta subunit provides nucleotide specificity of the enzyme and binds the substrate succinate, while the binding sites for coenzyme A and phosphate are found in the alpha subunit. The protein is Succinate--CoA ligase [ADP-forming] subunit beta of Micrococcus luteus (strain ATCC 4698 / DSM 20030 / JCM 1464 / CCM 169 / CCUG 5858 / IAM 1056 / NBRC 3333 / NCIMB 9278 / NCTC 2665 / VKM Ac-2230) (Micrococcus lysodeikticus).